A 112-amino-acid chain; its full sequence is Probable 4-amino-4-deoxy-L-arabinose-phosphoundecaprenol flippase subunit ArnE (112 aa).

One can recognise an EamA domain in the interval 35 to 110 (RHILFWLGMA…IVVGIVILGT (76 aa)). Helical transmembrane passes span 37–57 (ILFWLGMALLCLGCGMLLWLS), 66–86 (IAYPMLSLNFVWVTLAGWGIW), and 89–109 (PVARRHWLGVGLIVVGIVILG).

The protein belongs to the ArnE family. Heterodimer of ArnE and ArnF.

The protein localises to the cell inner membrane. It functions in the pathway bacterial outer membrane biogenesis; lipopolysaccharide biosynthesis. Its function is as follows. Translocates 4-amino-4-deoxy-L-arabinose-phosphoundecaprenol (alpha-L-Ara4N-phosphoundecaprenol) from the cytoplasmic to the periplasmic side of the inner membrane. This Klebsiella pneumoniae (strain 342) protein is Probable 4-amino-4-deoxy-L-arabinose-phosphoundecaprenol flippase subunit ArnE.